The sequence spans 653 residues: ATP-dependent zinc metalloprotease FtsH 1 (653 aa).

The Cytoplasmic segment spans residues 1 to 8; it reads MAENKWLR. A helical membrane pass occupies residues 9–29; that stretch reads NGFVWIVLIIAVVALWVTFMK. Residues 30-110 lie on the Extracellular side of the membrane; it reads DGGSAREENF…RVNPASQWGN (81 aa). Residues 111 to 131 form a helical membrane-spanning segment; it reads WLSALTFILPTLFLIGIVIFM. Over 132–653 the chain is Cytoplasmic; it reads MRQAQGTNNQ…SPTMRPQPAS (522 aa). Position 203 to 210 (203 to 210) interacts with ATP; the sequence is GPPGTGKT. Residue H425 participates in Zn(2+) binding. Residue E426 is part of the active site. H429 and D501 together coordinate Zn(2+). Residues 604–653 are disordered; that stretch reads EPRPRPQLVGPPVTRPAALAHKTEEADRGGERSPHPQPHPSPTMRPQPAS. Basic and acidic residues predominate over residues 624–637; that stretch reads HKTEEADRGGERSP. A compositionally biased stretch (pro residues) spans 638–653; it reads HPQPHPSPTMRPQPAS.

This sequence in the central section; belongs to the AAA ATPase family. In the C-terminal section; belongs to the peptidase M41 family. As to quaternary structure, homohexamer. Zn(2+) is required as a cofactor.

Its subcellular location is the cell membrane. In terms of biological role, acts as a processive, ATP-dependent zinc metallopeptidase for both cytoplasmic and membrane proteins. Plays a role in the quality control of integral membrane proteins. The polypeptide is ATP-dependent zinc metalloprotease FtsH 1 (Sphaerobacter thermophilus (strain ATCC 49802 / DSM 20745 / KCCM 41009 / NCIMB 13125 / S 6022)).